Reading from the N-terminus, the 437-residue chain is Aminopeptidase W (437 aa).

Active-site residues include Cys-70, His-361, and Asn-382.

This sequence belongs to the peptidase C1 family.

It localises to the cytoplasm. This chain is Aminopeptidase W (pepW), found in Lactobacillus delbrueckii subsp. lactis.